Here is a 505-residue protein sequence, read N- to C-terminus: Nostrin (505 aa).

An F-BAR domain is found at 1–260 (MRDPLTDCSY…AISKIDIEKD (260 aa)). Coiled-coil stretches lie at residues 101 to 128 (AHQV…LVIS), 160 to 222 (ITTE…RIQL), and 295 to 332 (KERQ…AYSS). Serine 114 carries the post-translational modification Phosphoserine. Residues 292-372 (AMSKERQTSS…SYKLSSVLAE (81 aa)) enclose the REM-1 domain. Positions 437–496 (LGNGLCKALYPFQARQDDELDLEKGDIVTIHKKKDEGWWFGSLKGKKGHFPAAYVEELPL) constitute an SH3 domain. A Phosphoserine modification is found at serine 478.

Homotrimer. Interacts with DAB2. Interacts with NOS3, DNM2, WASL and CAV1. Interacts (via SH3 domain) with DNM2; this interaction allows the recruitment of NOS3 to dynamin-positive structures. Present in pulmonary arterial endothelial cells (at protein level).

Its subcellular location is the cell membrane. The protein resides in the cytoplasmic vesicle. The protein localises to the cytoplasm. It localises to the cytoskeleton. Functionally, multivalent adapter protein which may decrease NOS3 activity by inducing its translocation away from the plasma membrane. This chain is Nostrin, found in Bos taurus (Bovine).